The sequence spans 468 residues: Methionine aminopeptidase 2 (468 aa).

Basic and acidic residues predominate over residues 63–74 (AAKEATKKDAKG). A disordered region spans residues 63 to 87 (AAKEATKKDAKGGKGKANGSAAATA). His-219 lines the substrate pocket. Positions 239, 250, and 319 each coordinate a divalent metal cation. His-327 serves as a coordination point for substrate. A divalent metal cation contacts are provided by Glu-352 and Glu-449.

Belongs to the peptidase M24A family. Methionine aminopeptidase eukaryotic type 2 subfamily. Requires Co(2+) as cofactor. The cofactor is Zn(2+). Mn(2+) is required as a cofactor. It depends on Fe(2+) as a cofactor.

The protein resides in the cytoplasm. It catalyses the reaction Release of N-terminal amino acids, preferentially methionine, from peptides and arylamides.. Inhibited by the fumagillin analog, TNP-470. Functionally, cotranslationally removes the N-terminal methionine from nascent proteins. The N-terminal methionine is often cleaved when the second residue in the primary sequence is small and uncharged (Met-Ala-, Cys, Gly, Pro, Ser, Thr, or Val). Required for germ cell proliferation and/or differentiation. The protein is Methionine aminopeptidase 2 of Caenorhabditis elegans.